The sequence spans 126 residues: Small ribosomal subunit protein uS11 (126 aa).

This sequence belongs to the universal ribosomal protein uS11 family. Part of the 30S ribosomal subunit.

Its function is as follows. Located on the platform of the 30S subunit. This is Small ribosomal subunit protein uS11 from Methanosarcina mazei (strain ATCC BAA-159 / DSM 3647 / Goe1 / Go1 / JCM 11833 / OCM 88) (Methanosarcina frisia).